Reading from the N-terminus, the 126-residue chain is MLKNTLDMTEYLSFLYFIFFSLFFCCFMLFTSWFLGGRSLSRYKNTPFESGVVSVGNTHLHFSVKFYLIAIFFVIFDVEALYLYAWSVSIVESGWIGFVEATIFILFLLLSLFYLVRIKALNWVTS.

3 helical membrane passes run 14–34 (FLYF…TSWF), 66–86 (FYLI…LYAW), and 96–116 (IGFV…FYLV).

The protein belongs to the complex I subunit 3 family. In terms of assembly, NDH-1 is composed of 13 different subunits. Subunits NuoA, H, J, K, L, M, N constitute the membrane sector of the complex.

Its subcellular location is the cell membrane. It carries out the reaction a quinone + NADH + 5 H(+)(in) = a quinol + NAD(+) + 4 H(+)(out). NDH-1 shuttles electrons from NADH, via FMN and iron-sulfur (Fe-S) centers, to quinones in the respiratory chain. The immediate electron acceptor for the enzyme in this species is believed to be ubiquinone. Couples the redox reaction to proton translocation (for every two electrons transferred, four hydrogen ions are translocated across the cytoplasmic membrane), and thus conserves the redox energy in a proton gradient. This Buchnera aphidicola subsp. Schizaphis graminum (strain Sg) protein is NADH-quinone oxidoreductase subunit A.